Reading from the N-terminus, the 852-residue chain is Zinc finger protein 484 (852 aa).

One can recognise a KRAB domain in the interval 8 to 78; it reads VSFKDVTVDF…DGEIPSQSRP (71 aa). Lys156 is covalently cross-linked (Glycyl lysine isopeptide (Lys-Gly) (interchain with G-Cter in SUMO2)). The C2H2-type 1; degenerate zinc-finger motif lies at 223 to 245; it reads CECNQCGKPLHHKQALIQQQKIH. A C2H2-type 2; degenerate zinc finger spans residues 279–301; it reads HECHECEAVFTQKSQLDGSQRVY. The C2H2-type 3; degenerate zinc-finger motif lies at 328 to 350; it reads YKCSDYGRAFIQKSDLFRCQRIH. The segment at 356 to 378 adopts a C2H2-type 4; degenerate zinc-finger fold; it reads YEYSECEKNLPQNSNLNIHKKIH. 15 C2H2-type zinc fingers span residues 384–406, 412–434, 440–462, 468–490, 496–518, 524–546, 552–574, 580–602, 608–630, 636–658, 664–686, 692–714, 720–742, 748–770, and 776–798; these read FECT…QKIH, YVCT…ERIH, YECS…QRIH, FICS…QKIH, YICT…QKIH, YKCS…QKCH, YECS…QQIH, YRCA…QKIH, YKCS…QQSH, YICN…RRIH, YECS…HRIH, and YICA…QKIH. A Glycyl lysine isopeptide (Lys-Gly) (interchain with G-Cter in SUMO2) cross-link involves residue Lys816.

It belongs to the krueppel C2H2-type zinc-finger protein family.

The protein localises to the nucleus. Functionally, may be involved in transcriptional regulation. This chain is Zinc finger protein 484 (ZNF484), found in Homo sapiens (Human).